The chain runs to 80 residues: U19-lycotoxin-Ls1b (80 aa).

Positions 1-22 are cleaved as a signal peptide; sequence MSPKVQALIFIVGLITLLAAHA. The propeptide occupies 23 to 34; it reads QEELSDNIESER. 4 disulfides stabilise this stretch: Cys-36/Cys-50, Cys-43/Cys-55, Cys-49/Cys-66, and Cys-57/Cys-64.

This sequence belongs to the neurotoxin 02 (plectoxin) family. 05 (U19-lycotoxin) subfamily. Expressed by the venom gland.

It localises to the secreted. The protein is U19-lycotoxin-Ls1b of Lycosa singoriensis (Wolf spider).